A 167-amino-acid chain; its full sequence is Lipoprotein signal peptidase (167 aa).

3 consecutive transmembrane segments (helical) span residues 9 to 29, 68 to 88, and 98 to 118; these read AWLY…TKNL, LPLL…YALY, and MGLI…LGMV. Catalysis depends on residues Asp120 and Asp138. A helical transmembrane segment spans residues 130-150; that stretch reads YWPAFNIADASISIGIALLIL.

It belongs to the peptidase A8 family.

Its subcellular location is the cell inner membrane. The catalysed reaction is Release of signal peptides from bacterial membrane prolipoproteins. Hydrolyzes -Xaa-Yaa-Zaa-|-(S,diacylglyceryl)Cys-, in which Xaa is hydrophobic (preferably Leu), and Yaa (Ala or Ser) and Zaa (Gly or Ala) have small, neutral side chains.. Its pathway is protein modification; lipoprotein biosynthesis (signal peptide cleavage). Its function is as follows. This protein specifically catalyzes the removal of signal peptides from prolipoproteins. This is Lipoprotein signal peptidase from Aquifex aeolicus (strain VF5).